We begin with the raw amino-acid sequence, 432 residues long: 3-phosphoshikimate 1-carboxyvinyltransferase (432 aa).

Residues Lys-23, Ser-24, and Arg-28 each contribute to the 3-phosphoshikimate site. Lys-23 is a phosphoenolpyruvate binding site. Phosphoenolpyruvate is bound by residues Gly-95 and Arg-123. Ser-167, Gln-169, Asp-317, and Lys-344 together coordinate 3-phosphoshikimate. Gln-169 contributes to the phosphoenolpyruvate binding site. Asp-317 serves as the catalytic Proton acceptor. Phosphoenolpyruvate contacts are provided by Arg-348 and Arg-390.

Belongs to the EPSP synthase family. Monomer.

Its subcellular location is the cytoplasm. The enzyme catalyses 3-phosphoshikimate + phosphoenolpyruvate = 5-O-(1-carboxyvinyl)-3-phosphoshikimate + phosphate. It participates in metabolic intermediate biosynthesis; chorismate biosynthesis; chorismate from D-erythrose 4-phosphate and phosphoenolpyruvate: step 6/7. Functionally, catalyzes the transfer of the enolpyruvyl moiety of phosphoenolpyruvate (PEP) to the 5-hydroxyl of shikimate-3-phosphate (S3P) to produce enolpyruvyl shikimate-3-phosphate and inorganic phosphate. This chain is 3-phosphoshikimate 1-carboxyvinyltransferase, found in Staphylococcus aureus (strain Newman).